A 303-amino-acid polypeptide reads, in one-letter code: tRNA-cytidine(32) 2-sulfurtransferase (303 aa).

The PP-loop motif motif lies at 49-54 (SGGKDS). The [4Fe-4S] cluster site is built by C124, C127, and C215.

Belongs to the TtcA family. Homodimer. Mg(2+) serves as cofactor. Requires [4Fe-4S] cluster as cofactor.

The protein localises to the cytoplasm. The enzyme catalyses cytidine(32) in tRNA + S-sulfanyl-L-cysteinyl-[cysteine desulfurase] + AH2 + ATP = 2-thiocytidine(32) in tRNA + L-cysteinyl-[cysteine desulfurase] + A + AMP + diphosphate + H(+). The protein operates within tRNA modification. Catalyzes the ATP-dependent 2-thiolation of cytidine in position 32 of tRNA, to form 2-thiocytidine (s(2)C32). The sulfur atoms are provided by the cysteine/cysteine desulfurase (IscS) system. The polypeptide is tRNA-cytidine(32) 2-sulfurtransferase (Anaeromyxobacter sp. (strain Fw109-5)).